The chain runs to 380 residues: Cobalt-precorrin-5B C(1)-methyltransferase (380 aa).

Belongs to the CbiD family.

The enzyme catalyses Co-precorrin-5B + S-adenosyl-L-methionine = Co-precorrin-6A + S-adenosyl-L-homocysteine. It participates in cofactor biosynthesis; adenosylcobalamin biosynthesis; cob(II)yrinate a,c-diamide from sirohydrochlorin (anaerobic route): step 6/10. Catalyzes the methylation of C-1 in cobalt-precorrin-5B to form cobalt-precorrin-6A. The protein is Cobalt-precorrin-5B C(1)-methyltransferase of Methanosphaera stadtmanae (strain ATCC 43021 / DSM 3091 / JCM 11832 / MCB-3).